The following is a 501-amino-acid chain: Glycerol kinase (501 aa).

Thr17 contacts ADP. Residues Thr17, Thr18, and Ser19 each contribute to the ATP site. Thr17 lines the sn-glycerol 3-phosphate pocket. Arg21 lines the ADP pocket. Sn-glycerol 3-phosphate is bound by residues Arg87, Glu88, Tyr139, and Asp243. Arg87, Glu88, Tyr139, Asp243, and Gln244 together coordinate glycerol. Thr265 and Gly308 together coordinate ADP. ATP contacts are provided by Thr265, Gly308, Gln312, and Gly409. Positions 409 and 413 each coordinate ADP.

This sequence belongs to the FGGY kinase family.

It catalyses the reaction glycerol + ATP = sn-glycerol 3-phosphate + ADP + H(+). It functions in the pathway polyol metabolism; glycerol degradation via glycerol kinase pathway; sn-glycerol 3-phosphate from glycerol: step 1/1. Inhibited by fructose 1,6-bisphosphate (FBP). In terms of biological role, key enzyme in the regulation of glycerol uptake and metabolism. Catalyzes the phosphorylation of glycerol to yield sn-glycerol 3-phosphate. The chain is Glycerol kinase from Pseudomonas savastanoi pv. phaseolicola (strain 1448A / Race 6) (Pseudomonas syringae pv. phaseolicola (strain 1448A / Race 6)).